Consider the following 299-residue polypeptide: Leucine zipper transcription factor-like protein 1 (299 aa).

Residues 96–296 (LKLQTDISEL…DLRKRLAQYE (201 aa)) are a coiled coil. The tract at residues 145-299 (GTAELLNKEI…KRLAQYEPED (155 aa)) is interaction with BSS9.

Belongs to the LZTFL1 family. As to quaternary structure, self-associates. Interacts with BBS9; the interaction mediates the association of LZTL1 with the BBsome complex and regulates BBSome ciliary trafficking.

It is found in the cytoplasm. In terms of biological role, regulates ciliary localization of the BBSome complex. Together with the BBSome complex, controls SMO ciliary trafficking and contributes to the sonic hedgehog (SHH) pathway regulation. May play a role in neurite outgrowth. May have tumor suppressor function. In Pongo abelii (Sumatran orangutan), this protein is Leucine zipper transcription factor-like protein 1 (LZTFL1).